We begin with the raw amino-acid sequence, 156 residues long: Small ribosomal subunit protein uS7 (156 aa).

The protein belongs to the universal ribosomal protein uS7 family. In terms of assembly, part of the 30S ribosomal subunit. Contacts proteins S9 and S11.

Functionally, one of the primary rRNA binding proteins, it binds directly to 16S rRNA where it nucleates assembly of the head domain of the 30S subunit. Is located at the subunit interface close to the decoding center, probably blocks exit of the E-site tRNA. This Methylobacterium radiotolerans (strain ATCC 27329 / DSM 1819 / JCM 2831 / NBRC 15690 / NCIMB 10815 / 0-1) protein is Small ribosomal subunit protein uS7.